The chain runs to 206 residues: Isopentenyl-diphosphate Delta-isomerase (206 aa).

Mn(2+)-binding residues include His44 and His51. A Nudix hydrolase domain is found at 49–183 (ALHLAFSCHV…PWAFSPWLVL (135 aa)). Cys86 is an active-site residue. Cys86 provides a ligand contact to Mg(2+). Position 88 (His88) interacts with Mn(2+). Residue Glu106 coordinates Mg(2+). 2 residues coordinate Mn(2+): Glu133 and Glu135. Glu135 is a catalytic residue.

Belongs to the IPP isomerase type 1 family. It depends on Mg(2+) as a cofactor. Mn(2+) serves as cofactor.

The protein resides in the cytoplasm. It carries out the reaction isopentenyl diphosphate = dimethylallyl diphosphate. It participates in isoprenoid biosynthesis; dimethylallyl diphosphate biosynthesis; dimethylallyl diphosphate from isopentenyl diphosphate: step 1/1. Catalyzes the 1,3-allylic rearrangement of the homoallylic substrate isopentenyl (IPP) to its highly electrophilic allylic isomer, dimethylallyl diphosphate (DMAPP). In Agromyces mediolanus (Corynebacterium mediolanum), this protein is Isopentenyl-diphosphate Delta-isomerase.